The chain runs to 499 residues: Glycerol kinase (499 aa).

Threonine 17 is an ADP binding site. ATP-binding residues include threonine 17, threonine 18, and serine 19. Threonine 17 contacts sn-glycerol 3-phosphate. Arginine 21 provides a ligand contact to ADP. The sn-glycerol 3-phosphate site is built by arginine 87, glutamate 88, tyrosine 139, and aspartate 243. Arginine 87, glutamate 88, tyrosine 139, aspartate 243, and glutamine 244 together coordinate glycerol. Positions 265 and 308 each coordinate ADP. Threonine 265, glycine 308, glutamine 312, and glycine 409 together coordinate ATP. 2 residues coordinate ADP: glycine 409 and asparagine 413.

Belongs to the FGGY kinase family.

The catalysed reaction is glycerol + ATP = sn-glycerol 3-phosphate + ADP + H(+). The protein operates within polyol metabolism; glycerol degradation via glycerol kinase pathway; sn-glycerol 3-phosphate from glycerol: step 1/1. With respect to regulation, inhibited by fructose 1,6-bisphosphate (FBP). Key enzyme in the regulation of glycerol uptake and metabolism. Catalyzes the phosphorylation of glycerol to yield sn-glycerol 3-phosphate. The protein is Glycerol kinase of Pseudomonas putida (strain ATCC 700007 / DSM 6899 / JCM 31910 / BCRC 17059 / LMG 24140 / F1).